A 403-amino-acid polypeptide reads, in one-letter code: Tyrosine--tRNA ligase (403 aa).

The short motif at 42–51 (PTAPDLHLGH) is the 'HIGH' region element. Residues 226 to 230 (KMSKS) carry the 'KMSKS' region motif. Lysine 229 contributes to the ATP binding site. The S4 RNA-binding domain maps to 339–400 (LRLAGLLTAA…GKRNFARVSL (62 aa)).

It belongs to the class-I aminoacyl-tRNA synthetase family. TyrS type 2 subfamily. Homodimer.

Its subcellular location is the cytoplasm. The enzyme catalyses tRNA(Tyr) + L-tyrosine + ATP = L-tyrosyl-tRNA(Tyr) + AMP + diphosphate + H(+). Its function is as follows. Catalyzes the attachment of tyrosine to tRNA(Tyr) in a two-step reaction: tyrosine is first activated by ATP to form Tyr-AMP and then transferred to the acceptor end of tRNA(Tyr). This chain is Tyrosine--tRNA ligase, found in Xanthomonas axonopodis pv. citri (strain 306).